A 345-amino-acid polypeptide reads, in one-letter code: N-acetyl-gamma-glutamyl-phosphate reductase (345 aa).

The active site involves cysteine 149.

It belongs to the NAGSA dehydrogenase family. Type 1 subfamily.

It localises to the cytoplasm. The catalysed reaction is N-acetyl-L-glutamate 5-semialdehyde + phosphate + NADP(+) = N-acetyl-L-glutamyl 5-phosphate + NADPH + H(+). The protein operates within amino-acid biosynthesis; L-arginine biosynthesis; N(2)-acetyl-L-ornithine from L-glutamate: step 3/4. Its function is as follows. Catalyzes the NADPH-dependent reduction of N-acetyl-5-glutamyl phosphate to yield N-acetyl-L-glutamate 5-semialdehyde. The polypeptide is N-acetyl-gamma-glutamyl-phosphate reductase (Bacillus cereus (strain 03BB102)).